A 348-amino-acid chain; its full sequence is D-erythrose-4-phosphate dehydrogenase (348 aa).

NAD(+)-binding positions include 12–13 (RI) and Arg81. Substrate contacts are provided by residues 154 to 156 (SCT), Arg200, 213 to 214 (TK), and Arg236. Cys155 (nucleophile) is an active-site residue. Asn318 lines the NAD(+) pocket.

Belongs to the glyceraldehyde-3-phosphate dehydrogenase family. Epd subfamily. Homotetramer.

The protein localises to the cytoplasm. The catalysed reaction is D-erythrose 4-phosphate + NAD(+) + H2O = 4-phospho-D-erythronate + NADH + 2 H(+). The protein operates within cofactor biosynthesis; pyridoxine 5'-phosphate biosynthesis; pyridoxine 5'-phosphate from D-erythrose 4-phosphate: step 1/5. Catalyzes the NAD-dependent conversion of D-erythrose 4-phosphate to 4-phosphoerythronate. This chain is D-erythrose-4-phosphate dehydrogenase, found in Salmonella paratyphi B (strain ATCC BAA-1250 / SPB7).